Consider the following 291-residue polypeptide: 4-diphosphocytidyl-2-C-methyl-D-erythritol kinase (291 aa).

K10 is an active-site residue. An ATP-binding site is contributed by 99–109; it reads PMGGGLGGGSS. D141 is an active-site residue.

This sequence belongs to the GHMP kinase family. IspE subfamily. In terms of assembly, homodimer.

It carries out the reaction 4-CDP-2-C-methyl-D-erythritol + ATP = 4-CDP-2-C-methyl-D-erythritol 2-phosphate + ADP + H(+). The protein operates within isoprenoid biosynthesis; isopentenyl diphosphate biosynthesis via DXP pathway; isopentenyl diphosphate from 1-deoxy-D-xylulose 5-phosphate: step 3/6. Functionally, catalyzes the phosphorylation of the position 2 hydroxy group of 4-diphosphocytidyl-2C-methyl-D-erythritol. The chain is 4-diphosphocytidyl-2-C-methyl-D-erythritol kinase from Proteus mirabilis (strain HI4320).